Consider the following 185-residue polypeptide: Elongation factor P (185 aa).

This sequence belongs to the elongation factor P family.

The protein resides in the cytoplasm. The protein operates within protein biosynthesis; polypeptide chain elongation. In terms of biological role, involved in peptide bond synthesis. Stimulates efficient translation and peptide-bond synthesis on native or reconstituted 70S ribosomes in vitro. Probably functions indirectly by altering the affinity of the ribosome for aminoacyl-tRNA, thus increasing their reactivity as acceptors for peptidyl transferase. This Synechococcus sp. (strain JA-2-3B'a(2-13)) (Cyanobacteria bacterium Yellowstone B-Prime) protein is Elongation factor P.